The following is a 452-amino-acid chain: MPFIPHTEEDIQAMLASIGANSIDELFDEIPPALKTGSLKRVPPGLSEMEISRLMLERAEQDGRYLNFIGAGAYEHHIPAAVWQIATRGEFYSSYTPYQAEASQGTLQLLYEYQTMMASLTGMDVSNASMYDGASALAEAALMAVRSHRTSRRILIPQTVHPVYRSVVRAIVKNQGIEVVEVPYDKLSGQTSLDGLKNFGSEEFAALVIPQPNFFGVLEDVDTLTDWAQSRDAFAIAVVNPMALAMLTPPGEWGEKGADIAVGEGQPLGIPLSSGGPYFGFMACKQPLVRQMPGRIIGRTTDQEGSDGFVLTLQAREQHIRRSKATSNICTNQGLMVTAATIYLALLGPEGLRRTAAQSHANTAALLEKLEKLKGVKRVFSGPVFHEAVISLPRPSASVLQALEARRILGGLNLKEYYPELGDAVLVCATETKTSGDMENYVTQLGEVIRNS.

This sequence belongs to the GcvP family. N-terminal subunit subfamily. The glycine cleavage system is composed of four proteins: P, T, L and H. In this organism, the P 'protein' is a heterodimer of two subunits.

It carries out the reaction N(6)-[(R)-lipoyl]-L-lysyl-[glycine-cleavage complex H protein] + glycine + H(+) = N(6)-[(R)-S(8)-aminomethyldihydrolipoyl]-L-lysyl-[glycine-cleavage complex H protein] + CO2. Functionally, the glycine cleavage system catalyzes the degradation of glycine. The P protein binds the alpha-amino group of glycine through its pyridoxal phosphate cofactor; CO(2) is released and the remaining methylamine moiety is then transferred to the lipoamide cofactor of the H protein. This Nitrosospira multiformis (strain ATCC 25196 / NCIMB 11849 / C 71) protein is Probable glycine dehydrogenase (decarboxylating) subunit 1.